The following is a 403-amino-acid chain: S-adenosylmethionine synthase (403 aa).

ATP is bound at residue His-17. A Mg(2+)-binding site is contributed by Asp-19. Glu-45 lines the K(+) pocket. Residues Glu-58 and Gln-101 each coordinate L-methionine. Positions 101 to 111 (QSPDIAMGVDR) are flexible loop. ATP-binding positions include 177–179 (DGK), 244–245 (RF), Asp-253, 259–260 (RK), Ala-276, and Lys-280. Asp-253 is a binding site for L-methionine. Lys-284 is an L-methionine binding site.

It belongs to the AdoMet synthase family. Homotetramer; dimer of dimers. It depends on Mg(2+) as a cofactor. K(+) is required as a cofactor.

It localises to the cytoplasm. It catalyses the reaction L-methionine + ATP + H2O = S-adenosyl-L-methionine + phosphate + diphosphate. The protein operates within amino-acid biosynthesis; S-adenosyl-L-methionine biosynthesis; S-adenosyl-L-methionine from L-methionine: step 1/1. Functionally, catalyzes the formation of S-adenosylmethionine (AdoMet) from methionine and ATP. The overall synthetic reaction is composed of two sequential steps, AdoMet formation and the subsequent tripolyphosphate hydrolysis which occurs prior to release of AdoMet from the enzyme. The protein is S-adenosylmethionine synthase of Geobacillus kaustophilus (strain HTA426).